Reading from the N-terminus, the 214-residue chain is Cell division protein SepF (214 aa).

The interval 23-70 is disordered; it reads YYDDRAPSRGFPRPRFDDGYGRYDGDDYDDPRREPADYPPPAGYRGGY. The segment covering 36-58 has biased composition (basic and acidic residues); sequence PRFDDGYGRYDGDDYDDPRREPA.

Belongs to the SepF family. Homodimer. Interacts with FtsZ.

The protein localises to the cytoplasm. Its function is as follows. Cell division protein that is part of the divisome complex and is recruited early to the Z-ring. Probably stimulates Z-ring formation, perhaps through the cross-linking of FtsZ protofilaments. Its function overlaps with FtsA. This Mycobacterium avium (strain 104) protein is Cell division protein SepF.